The following is a 454-amino-acid chain: tRNA modification GTPase MnmE (454 aa).

Residues Arg-23, Glu-80, and Lys-120 each contribute to the (6S)-5-formyl-5,6,7,8-tetrahydrofolate site. The region spanning 216–377 (GMKVVIAGRP…LRDHLKQSMG (162 aa)) is the TrmE-type G domain. Residue Asn-226 coordinates K(+). GTP is bound by residues 226–231 (NAGKSS), 245–251 (TDIAGTT), 270–273 (DTAG), 335–338 (NKAD), and 358–360 (SAR). A Mg(2+)-binding site is contributed by Ser-230. K(+)-binding residues include Thr-245, Ile-247, and Thr-250. Residue Thr-251 participates in Mg(2+) binding. Residue Lys-454 coordinates (6S)-5-formyl-5,6,7,8-tetrahydrofolate.

Belongs to the TRAFAC class TrmE-Era-EngA-EngB-Septin-like GTPase superfamily. TrmE GTPase family. Homodimer. Heterotetramer of two MnmE and two MnmG subunits. K(+) serves as cofactor.

Its subcellular location is the cytoplasm. Its function is as follows. Exhibits a very high intrinsic GTPase hydrolysis rate. Involved in the addition of a carboxymethylaminomethyl (cmnm) group at the wobble position (U34) of certain tRNAs, forming tRNA-cmnm(5)s(2)U34. In Yersinia pestis, this protein is tRNA modification GTPase MnmE.